The following is a 404-amino-acid chain: Ethanolamine-phosphate cytidylyltransferase (404 aa).

Residues 173-201 form a disordered region; sequence YADSFGKPPHPTPAGDTLSSEVSSQCPGG. The span at 189–201 shows a compositional bias: polar residues; it reads TLSSEVSSQCPGG. CTP is bound by residues 239–240, 247–250, Lys277, 325–328, and 354–358; these read AF, HVDF, HGKT, and SGSDL. Ser356 is modified (phosphoserine). Thr359 and Thr360 each carry phosphothreonine.

This sequence belongs to the cytidylyltransferase family.

It catalyses the reaction phosphoethanolamine + CTP + H(+) = CDP-ethanolamine + diphosphate. Its pathway is phospholipid metabolism; phosphatidylethanolamine biosynthesis; phosphatidylethanolamine from ethanolamine: step 2/3. In terms of biological role, ethanolamine-phosphate cytidylyltransferase that catalyzes the second step in the synthesis of phosphatidylethanolamine (PE) from ethanolamine via the CDP-ethanolamine pathway. Phosphatidylethanolamine is a dominant inner-leaflet phospholipid in cell membranes, where it plays a role in membrane function by structurally stabilizing membrane-anchored proteins, and participates in important cellular processes such as cell division, cell fusion, blood coagulation, and apoptosis. The sequence is that of Ethanolamine-phosphate cytidylyltransferase (Pcyt2) from Mus musculus (Mouse).